We begin with the raw amino-acid sequence, 358 residues long: tRNA-specific 2-thiouridylase MnmA (358 aa).

ATP-binding positions include 22-29 (LVSGGIDS) and F48. C105 acts as the Nucleophile in catalysis. Cysteines 105 and 201 form a disulfide. G129 is a binding site for ATP. Residues 151–153 (KEQ) are interaction with tRNA. The Cysteine persulfide intermediate role is filled by C201. Residues 306–307 (RY) form an interaction with tRNA region.

Belongs to the MnmA/TRMU family.

It is found in the cytoplasm. The catalysed reaction is S-sulfanyl-L-cysteinyl-[protein] + uridine(34) in tRNA + AH2 + ATP = 2-thiouridine(34) in tRNA + L-cysteinyl-[protein] + A + AMP + diphosphate + H(+). In terms of biological role, catalyzes the 2-thiolation of uridine at the wobble position (U34) of tRNA, leading to the formation of s(2)U34. The polypeptide is tRNA-specific 2-thiouridylase MnmA (Desulfosudis oleivorans (strain DSM 6200 / JCM 39069 / Hxd3) (Desulfococcus oleovorans)).